The sequence spans 572 residues: 2-isopropylmalate synthase (572 aa).

In terms of domain architecture, Pyruvate carboxyltransferase spans Pro31–Asn305. Mg(2+) is bound by residues Asp40, His244, His246, and Asn280. Residues Asn437–Val572 are regulatory domain.

This sequence belongs to the alpha-IPM synthase/homocitrate synthase family. LeuA type 2 subfamily. Homodimer. The cofactor is Mg(2+).

It localises to the cytoplasm. The catalysed reaction is 3-methyl-2-oxobutanoate + acetyl-CoA + H2O = (2S)-2-isopropylmalate + CoA + H(+). Its pathway is amino-acid biosynthesis; L-leucine biosynthesis; L-leucine from 3-methyl-2-oxobutanoate: step 1/4. Functionally, catalyzes the condensation of the acetyl group of acetyl-CoA with 3-methyl-2-oxobutanoate (2-ketoisovalerate) to form 3-carboxy-3-hydroxy-4-methylpentanoate (2-isopropylmalate). This chain is 2-isopropylmalate synthase, found in Paraburkholderia phytofirmans (strain DSM 17436 / LMG 22146 / PsJN) (Burkholderia phytofirmans).